A 122-amino-acid polypeptide reads, in one-letter code: MKANTMFIILCLTLSTLCVSSQFTSVLGKIFVTNRAVKSSSYEKYPFDLSKEDGAQPYFMTPRLRFYPIGKRAAGGMEQSEGQNPETKSHSWRERSVLTPSLLSLGESLESGISKRISINQD.

The first 21 residues, 1-21 (MKANTMFIILCLTLSTLCVSS), serve as a signal peptide directing secretion. A propeptide spanning residues 22–34 (QFTSVLGKIFVTN) is cleaved from the precursor. The residue at position 69 (isoleucine 69) is an Isoleucine amide. Residues 73–122 (AAGGMEQSEGQNPETKSHSWRERSVLTPSLLSLGESLESGISKRISINQD) constitute a propeptide that is removed on maturation. Positions 74-95 (AGGMEQSEGQNPETKSHSWRER) are disordered.

This sequence belongs to the molluscan ELH family.

It localises to the secreted. In terms of biological role, the atrial gland peptide A and peptide B precursors are the source of the 2 peptides that, upon release from this reproductive system gland, initiate the egg-laying process by exciting the bag cell neurons. These neurons, clustered in neural connectives near the abdominal ganglion, in turn release other peptides that act directly on the ganglion and also, via the circulating hemolymph, on many other organs to control the physiological processes of egg-laying. One of these other peptides is the egg-laying hormone. The protein is Atrial gland peptide B of Aplysia californica (California sea hare).